We begin with the raw amino-acid sequence, 406 residues long: MADVKKVVLAYSGGLDTSVILKWLQDTYNCEVVTFTADLGQGEEVEPARAKAQALGVKEIFIDDLREEFVRDFVFPMFRANTVYEGEYLLGTSIARPLIAKRLIEIANATGADAISHGATGKGNDQVRFELGAYALKPGVKVIAPWREWDLLSREKLMDYAEKHGIPIERHGKKKSPYSMDANLLHISYEGGVLEDTWTEHEEDMWRWTKSPEAAPDVPTYVELTYRGGDIVAIDGVERTPAQVLGELNRMGGENGIGRLDIVENRYVGMKSRGCYETPGGTIMLKARRAIESITLDREVAHLKDELMPRYASLIYNGYWWSPERLMLQQMIDASQTSVNGVVRLKLYKGNVIVVGRKSDDSLFDASIATFEEDGGAYNQADAAGFIKLNALRMRIAASKGRNTLK.

Residues 10–18 (AYSGGLDTS) and alanine 37 contribute to the ATP site. 2 residues coordinate L-citrulline: tyrosine 88 and serine 93. Glycine 118 provides a ligand contact to ATP. The L-aspartate site is built by threonine 120, asparagine 124, and aspartate 125. Asparagine 124 lines the L-citrulline pocket. The L-citrulline site is built by arginine 128, serine 179, serine 188, glutamate 264, and tyrosine 276.

The protein belongs to the argininosuccinate synthase family. Type 1 subfamily. As to quaternary structure, homotetramer.

It localises to the cytoplasm. The catalysed reaction is L-citrulline + L-aspartate + ATP = 2-(N(omega)-L-arginino)succinate + AMP + diphosphate + H(+). The protein operates within amino-acid biosynthesis; L-arginine biosynthesis; L-arginine from L-ornithine and carbamoyl phosphate: step 2/3. The polypeptide is Argininosuccinate synthase (Azotobacter vinelandii (strain DJ / ATCC BAA-1303)).